Reading from the N-terminus, the 413-residue chain is Peptide chain release factor 1, mitochondrial (413 aa).

Gln287 carries the N5-methylglutamine modification. Residues 335 to 363 are disordered; that stretch reads RLEKEEKERKARKSQVSSTNRSDKIRTYN.

The protein belongs to the prokaryotic/mitochondrial release factor family. Post-translationally, methylation of glutamine in the GGQ triplet is conserved from bacteria to mammals. N5-methylated on Gln-287 by MTQ1.

It is found in the mitochondrion. Its function is as follows. Mitochondrial peptide chain release factor that directs the termination of translation in response to the peptide chain termination codons UAA and UAG. This chain is Peptide chain release factor 1, mitochondrial (MRF1), found in Saccharomyces cerevisiae (strain ATCC 204508 / S288c) (Baker's yeast).